A 71-amino-acid polypeptide reads, in one-letter code: uncharacterized protein (71 aa).

Residues 15–71 (PNFEYARRLNGKKVKIFLRNGEVLDAEVTGVSNYEIMVKVGDRNLLVFKHAIDYIEY) form the Sm domain.

This is an uncharacterized protein from Methanocaldococcus jannaschii (strain ATCC 43067 / DSM 2661 / JAL-1 / JCM 10045 / NBRC 100440) (Methanococcus jannaschii).